A 219-amino-acid polypeptide reads, in one-letter code: Redox-sensing transcriptional repressor Rex (219 aa).

The H-T-H motif DNA-binding region spans 17–56 (RYLRYVEDLLNHDIMRISSSELSQRMGYTASQVRQDFNNF). 91–96 (GVGNLG) contacts NAD(+).

This sequence belongs to the transcriptional regulatory Rex family. In terms of assembly, homodimer.

It is found in the cytoplasm. In terms of biological role, modulates transcription in response to changes in cellular NADH/NAD(+) redox state. This is Redox-sensing transcriptional repressor Rex from Caldicellulosiruptor saccharolyticus (strain ATCC 43494 / DSM 8903 / Tp8T 6331).